Reading from the N-terminus, the 2067-residue chain is Lipoxygenase homology domain-containing protein 1 (2067 aa).

PLAT domains lie at 43–160 (RVYE…RDLL), 172–287 (NKYE…RDIL), 296–412 (ITYI…RQLY), 425–540 (FPWS…REMT), 553–673 (ARYH…RELL), 684–803 (FRYH…VELY), 814–934 (VHYE…RELL), 969–1087 (TTFS…RDLF), 1100–1225 (VPYE…RELV), 1254–1372 (VLYS…RLFY), 1421–1539 (IPYY…RVFD), 1552–1667 (VLYE…CEMC), 1679–1797 (TSYT…RDFA), 1810–1931 (TTYE…VFEV), and 1948–2064 (VKYE…RDLF).

The protein resides in the cell projection. The protein localises to the stereocilium. Functionally, involved in hearing. Required for normal function of hair cells in the inner ear. The polypeptide is Lipoxygenase homology domain-containing protein 1 (LOXHD1) (Homo sapiens (Human)).